The primary structure comprises 172 residues: 6,7-dimethyl-8-ribityllumazine synthase (172 aa).

Residues Phe-24, 58-60, and 82-84 each bind 5-amino-6-(D-ribitylamino)uracil; these read ALE and AVI. 87 to 88 serves as a coordination point for (2S)-2-hydroxy-3-oxobutyl phosphate; it reads ET. The active-site Proton donor is the His-90. Residue Asn-115 participates in 5-amino-6-(D-ribitylamino)uracil binding. Arg-129 lines the (2S)-2-hydroxy-3-oxobutyl phosphate pocket. Residues 150-172 are disordered; that stretch reads ALDQLGDDDEDEEEDEDDEEERA. Positions 154 to 172 are enriched in acidic residues; sequence LGDDDEDEEEDEDDEEERA.

The protein belongs to the DMRL synthase family.

It catalyses the reaction (2S)-2-hydroxy-3-oxobutyl phosphate + 5-amino-6-(D-ribitylamino)uracil = 6,7-dimethyl-8-(1-D-ribityl)lumazine + phosphate + 2 H2O + H(+). It functions in the pathway cofactor biosynthesis; riboflavin biosynthesis; riboflavin from 2-hydroxy-3-oxobutyl phosphate and 5-amino-6-(D-ribitylamino)uracil: step 1/2. Catalyzes the formation of 6,7-dimethyl-8-ribityllumazine by condensation of 5-amino-6-(D-ribitylamino)uracil with 3,4-dihydroxy-2-butanone 4-phosphate. This is the penultimate step in the biosynthesis of riboflavin. The chain is 6,7-dimethyl-8-ribityllumazine synthase from Burkholderia multivorans (strain ATCC 17616 / 249).